The chain runs to 1146 residues: Cell division cycle and apoptosis regulator protein 1 (1146 aa).

The interaction with AR stretch occupies residues 1–246; that stretch reads MAQFGGQKNP…AQPQPQSLLQ (246 aa). The segment at 200-657 is interaction with GATA2; the sequence is QRIQTLPNQN…RALSSKGLKS (458 aa). The segment at 282–351 is disordered; sequence IVSQPQPARR…RRERERSPRR (70 aa). Composition is skewed to basic and acidic residues over residues 290-331 and 338-349; these read RRLD…ERSP and ERSPRRERERSP. Residue serine 453 is modified to Phosphoserine. Residues 591-615 adopt a coiled-coil conformation; sequence KQQLVEKLQGERKKADGEQDEEEKD. The segment at 599–635 is disordered; the sequence is QGERKKADGEQDEEEKDDGEVKEIATPTHWSKLDPKA. The segment covering 608-618 has biased composition (acidic residues); sequence EQDEEEKDDGE. The residue at position 624 (threonine 624) is a Phosphothreonine. One can recognise an SAP domain in the interval 633 to 667; sequence PKAMKVNDLRKELESRALSSKGLKSQLIARLTKQL. Lysine 634 is covalently cross-linked (Glycyl lysine isopeptide (Lys-Gly) (interchain with G-Cter in ubiquitin)). Residues 640–1146 form an interaction with GATA1 region; the sequence is DLRKELESRA…EKSKENGSGV (507 aa). Threonine 664 is modified (phosphothreonine). Composition is skewed to basic and acidic residues over residues 671–684, 691–716, 793–814, and 829–852; these read EQKE…KSEK, DKKS…RQER, KEDK…KKEE, and SGDD…KDDS. Disordered regions lie at residues 671 to 716 and 793 to 912; these read EQKE…RQER and KEDK…KEKP. 2 positions are modified to phosphoserine: serine 682 and serine 694. The segment covering 853–884 has biased composition (acidic residues); the sequence is KDDDETEEDNNQDEYDPMEAEEAEDEDDDREE. At threonine 858 the chain carries Phosphothreonine. Residues 885-912 show a composition bias toward basic and acidic residues; it reads EEVKRDDKRDVSRYCKDRPAKDKEKEKP. Lysine 1008 is covalently cross-linked (Glycyl lysine isopeptide (Lys-Gly) (interchain with G-Cter in SUMO1); alternate). Lysine 1008 participates in a covalent cross-link: Glycyl lysine isopeptide (Lys-Gly) (interchain with G-Cter in SUMO2); alternate. Residues 1029–1110 adopt a coiled-coil conformation; the sequence is DVGSLLQKLE…LQFENQLNKT (82 aa). Glycyl lysine isopeptide (Lys-Gly) (interchain with G-Cter in SUMO2) cross-links involve residues lysine 1063 and lysine 1131.

In terms of assembly, directly interacts with ESR1, NR3C1 and p53/TP53. Interacts (via N-terminus) with CALCOCO1. Interacts with MED1 and GATA1. Interacts with AR and GATA2.

Its subcellular location is the cytoplasm. It is found in the perinuclear region. Functionally, associates with components of the Mediator and p160 coactivator complexes that play a role as intermediaries transducing regulatory signals from upstream transcriptional activator proteins to basal transcription machinery at the core promoter. Recruited to endogenous nuclear receptor target genes in response to the appropriate hormone. Also functions as a p53 coactivator. May thus play an important role in transcriptional regulation. May be involved in apoptosis signaling in the presence of the retinoid CD437. Apoptosis induction involves sequestration of 14-3-3 protein(s) and mediated altered expression of multiple cell cycle regulatory genes including MYC, CCNB1 and CDKN1A. Plays a role in cell cycle progression and/or cell proliferation. In association with CALCOCO1 enhances GATA1- and MED1-mediated transcriptional activation from the gamma-globin promoter during erythroid differentiation of K562 erythroleukemia cells. Can act as a both a coactivator and corepressor of AR-mediated transcription. Contributes to chromatin looping and AR transcription complex assembly by stabilizing AR-GATA2 association on chromatin and facilitating MED1 and RNA polymerase II recruitment to AR-binding sites. May play an important role in the growth and tumorigenesis of prostate cancer cells. In Mus musculus (Mouse), this protein is Cell division cycle and apoptosis regulator protein 1 (Ccar1).